A 295-amino-acid chain; its full sequence is Probable endonuclease 4 (295 aa).

Residues His78, His118, Glu154, Asp188, His191, His225, Asp238, His240, and Glu270 each coordinate Zn(2+).

It belongs to the AP endonuclease 2 family. Zn(2+) serves as cofactor.

The enzyme catalyses Endonucleolytic cleavage to 5'-phosphooligonucleotide end-products.. In terms of biological role, endonuclease IV plays a role in DNA repair. It cleaves phosphodiester bonds at apurinic or apyrimidinic (AP) sites, generating a 3'-hydroxyl group and a 5'-terminal sugar phosphate. The polypeptide is Probable endonuclease 4 (Vibrio campbellii (strain ATCC BAA-1116)).